The primary structure comprises 806 residues: Leucine--tRNA ligase (806 aa).

A 'HIGH' region motif is present at residues 40 to 51 (PYPSGSGLHVGH). The short motif at 576-580 (KMSKS) is the 'KMSKS' region element. Lys579 serves as a coordination point for ATP.

The protein belongs to the class-I aminoacyl-tRNA synthetase family.

The protein resides in the cytoplasm. The enzyme catalyses tRNA(Leu) + L-leucine + ATP = L-leucyl-tRNA(Leu) + AMP + diphosphate. This is Leucine--tRNA ligase from Chlorobium phaeobacteroides (strain BS1).